The chain runs to 555 residues: Glucosylglycerate phosphorylase (555 aa).

The Nucleophile role is filled by aspartate 231.

This sequence belongs to the glycosyl hydrolase 13 family. Glucosylglycerate phosphorylase subfamily.

The enzyme catalyses (2R)-2-O-(alpha-D-glucopyranosyl)-glycerate + phosphate = (R)-glycerate + alpha-D-glucose 1-phosphate. Its function is as follows. Catalyzes the reversible phosphorolysis of glucosylglycerate into alpha-D-glucose 1-phosphate (Glc1P) and D-glycerate. May be a regulator of intracellular levels of glucosylglycerate, a compatible solute that primarily protects organisms facing salt stress and very specific nutritional constraints. Has a very strict substrate specificity. Cannot catalyze the phosphorolysis of sucrose or synthesize sucrose from Glc1P and D-fructose. The protein is Glucosylglycerate phosphorylase of Allomeiothermus silvanus (strain ATCC 700542 / DSM 9946 / NBRC 106475 / NCIMB 13440 / VI-R2) (Thermus silvanus).